The sequence spans 392 residues: Homoserine O-acetyltransferase (392 aa).

An AB hydrolase-1 domain is found at 52-356; the sequence is NVVVVLHALT…ICGHDGFLVE (305 aa). The active-site Nucleophile is Ser-157. Arg-227 lines the substrate pocket. Catalysis depends on residues Asp-320 and His-350. Asp-351 is a substrate binding site. The segment at 373 to 392 is disordered; it reads SQSAGPGGAGPGSRKGTTRR.

This sequence belongs to the AB hydrolase superfamily. MetX family. As to quaternary structure, homodimer.

The protein localises to the cytoplasm. The enzyme catalyses L-homoserine + acetyl-CoA = O-acetyl-L-homoserine + CoA. Its pathway is amino-acid biosynthesis; L-methionine biosynthesis via de novo pathway; O-acetyl-L-homoserine from L-homoserine: step 1/1. In terms of biological role, transfers an acetyl group from acetyl-CoA to L-homoserine, forming acetyl-L-homoserine. The sequence is that of Homoserine O-acetyltransferase from Mycolicibacterium paratuberculosis (strain ATCC BAA-968 / K-10) (Mycobacterium paratuberculosis).